The following is a 349-amino-acid chain: tRNA N6-adenosine threonylcarbamoyltransferase (349 aa).

2 residues coordinate Fe cation: His-117 and His-121. Residues 140–144 (LVSGG), Asp-173, Gly-186, and Asn-284 each bind substrate. Asp-312 lines the Fe cation pocket.

It belongs to the KAE1 / TsaD family. It depends on Fe(2+) as a cofactor.

The protein resides in the cytoplasm. It carries out the reaction L-threonylcarbamoyladenylate + adenosine(37) in tRNA = N(6)-L-threonylcarbamoyladenosine(37) in tRNA + AMP + H(+). In terms of biological role, required for the formation of a threonylcarbamoyl group on adenosine at position 37 (t(6)A37) in tRNAs that read codons beginning with adenine. Is involved in the transfer of the threonylcarbamoyl moiety of threonylcarbamoyl-AMP (TC-AMP) to the N6 group of A37, together with TsaE and TsaB. TsaD likely plays a direct catalytic role in this reaction. This is tRNA N6-adenosine threonylcarbamoyltransferase from Psychrobacter arcticus (strain DSM 17307 / VKM B-2377 / 273-4).